The chain runs to 277 residues: Large ribosomal subunit protein uL2 (277 aa).

Disordered regions lie at residues 37 to 58 (LHSK…GGGH) and 222 to 277 (GVAM…NRRR). The segment covering 268 to 277 (VRRRKQNRRR) has biased composition (basic residues).

This sequence belongs to the universal ribosomal protein uL2 family. Part of the 50S ribosomal subunit. Forms a bridge to the 30S subunit in the 70S ribosome.

Functionally, one of the primary rRNA binding proteins. Required for association of the 30S and 50S subunits to form the 70S ribosome, for tRNA binding and peptide bond formation. It has been suggested to have peptidyltransferase activity; this is somewhat controversial. Makes several contacts with the 16S rRNA in the 70S ribosome. In Parafrankia sp. (strain EAN1pec), this protein is Large ribosomal subunit protein uL2.